The chain runs to 418 residues: ATP phosphoribosyltransferase regulatory subunit (418 aa).

Belongs to the class-II aminoacyl-tRNA synthetase family. HisZ subfamily. Heteromultimer composed of HisG and HisZ subunits.

Its subcellular location is the cytoplasm. Its pathway is amino-acid biosynthesis; L-histidine biosynthesis; L-histidine from 5-phospho-alpha-D-ribose 1-diphosphate: step 1/9. Functionally, required for the first step of histidine biosynthesis. May allow the feedback regulation of ATP phosphoribosyltransferase activity by histidine. This is ATP phosphoribosyltransferase regulatory subunit from Halothermothrix orenii (strain H 168 / OCM 544 / DSM 9562).